The sequence spans 189 residues: Ribosomal RNA large subunit methyltransferase E (189 aa).

S-adenosyl-L-methionine-binding residues include glycine 45, phenylalanine 47, aspartate 64, aspartate 82, and aspartate 104. Lysine 144 acts as the Proton acceptor in catalysis.

This sequence belongs to the class I-like SAM-binding methyltransferase superfamily. RNA methyltransferase RlmE family.

It is found in the cytoplasm. The enzyme catalyses uridine(2552) in 23S rRNA + S-adenosyl-L-methionine = 2'-O-methyluridine(2552) in 23S rRNA + S-adenosyl-L-homocysteine + H(+). In terms of biological role, specifically methylates the uridine in position 2552 of 23S rRNA at the 2'-O position of the ribose in the fully assembled 50S ribosomal subunit. The polypeptide is Ribosomal RNA large subunit methyltransferase E (Borreliella afzelii (strain PKo) (Borrelia afzelii)).